Here is a 242-residue protein sequence, read N- to C-terminus: DnaJ homolog subfamily B member 6 (242 aa).

The J domain maps to 3-69 (EYYDVLGVQR…KKRDIYDKYG (67 aa)).

Homooligomer.

The protein resides in the cytoplasm. The protein localises to the perinuclear region. It localises to the nucleus. Has a stimulatory effect on the ATPase activity of HSP70 in a dose-dependent and time-dependent manner and hence acts as a co-chaperone of HSP70. Plays an indispensable role in the organization of KRT8/KRT18 filaments. Acts as an endogenous molecular chaperone for neuronal proteins including huntingtin. Suppresses aggregation and toxicity of polyglutamine-containing, aggregation-prone proteins. Also reduces cellular toxicity and caspase-3 activity. This is DnaJ homolog subfamily B member 6 from Xenopus tropicalis (Western clawed frog).